The chain runs to 485 residues: Glutamyl-tRNA(Gln) amidotransferase subunit A (485 aa).

Catalysis depends on charge relay system residues Lys78 and Ser153. The active-site Acyl-ester intermediate is the Ser177.

The protein belongs to the amidase family. GatA subfamily. In terms of assembly, heterotrimer of A, B and C subunits.

It catalyses the reaction L-glutamyl-tRNA(Gln) + L-glutamine + ATP + H2O = L-glutaminyl-tRNA(Gln) + L-glutamate + ADP + phosphate + H(+). Its function is as follows. Allows the formation of correctly charged Gln-tRNA(Gln) through the transamidation of misacylated Glu-tRNA(Gln) in organisms which lack glutaminyl-tRNA synthetase. The reaction takes place in the presence of glutamine and ATP through an activated gamma-phospho-Glu-tRNA(Gln). The polypeptide is Glutamyl-tRNA(Gln) amidotransferase subunit A (Bacillus cereus (strain G9842)).